We begin with the raw amino-acid sequence, 307 residues long: Bidirectional sugar transporter SWEET11 (307 aa).

Over 1-14 (MAGGFLSMANPAVT) the chain is Extracellular. A helical transmembrane segment spans residues 15–35 (LSGVAGNIISFLVFLAPVATF). Positions 17 to 100 (GVAGNIISFL…VLYLVYAPRR (84 aa)) constitute a MtN3/slv 1 domain. Residues 36–47 (LQVYKKKSTGGY) lie on the Cytoplasmic side of the membrane. Residues 48–68 (SSVPYVVALFSSVLWIFYALV) form a helical membrane-spanning segment. Residues 69 to 74 (KTNSRP) lie on the Extracellular side of the membrane. The helical transmembrane segment at 75 to 95 (LLTINAFGCGVEAAYIVLYLV) threads the bilayer. Over 96 to 107 (YAPRRARLRTLA) the chain is Cytoplasmic. The helical transmembrane segment at 108 to 128 (FFLLLDVAAFALIVVTTLYLV) threads the bilayer. Over 129 to 135 (PKPHQVK) the chain is Extracellular. Residues 136–156 (FLGSVCLAFSMAVFVAPLSII) form a helical membrane-spanning segment. A MtN3/slv 2 domain is found at 136-219 (FLGSVCLAFS…MGLYFWYRKP (84 aa)). Residues 157–168 (FKVIKTKSVEFM) lie on the Cytoplasmic side of the membrane. Residues 169 to 189 (PIGLSVCLTLSAVAWFCYGLF) form a helical membrane-spanning segment. Residues 190–194 (TKDPY) are Extracellular-facing. A helical membrane pass occupies residues 195-215 (VMYPNVGGFFFSCVQMGLYFW). Residues 216-307 (YRKPRNTAVL…PEVIEITAAV (92 aa)) lie on the Cytoplasmic side of the membrane.

The protein belongs to the SWEET sugar transporter family. Interacts with COPT1 and COPT2. Interacts with APX8. Mostly expressed in panicles and anthers. Also detected in leaves (leaf collar, leaf auricle, leaf ligule), roots, sheaths, culms and culm nodes.

It localises to the cell membrane. Mediates both low-affinity uptake and efflux of sugar across the plasma membrane. Required for pollen viability. Involved in the transport of copper, in cooperation with COPT1 and COPT2. Functionally, confers sensitivity to bacterial blight mediated by X.oryzae pv. oryzae (Xoo) in its Xa13 allelic form (e.g. cv. IR24), probably by providing the sugar required for the pathogen growth, or by reducing copper contents in xylem. However, a recessive resistance can be associated with the xa13 allele (in which the promoter is mutated leading to reduced induction upon pathogen infection, e.g. cv. IRBB13), specifically toward Xoo Philippine race 6 and Indian race PXO8. In Oryza sativa subsp. japonica (Rice), this protein is Bidirectional sugar transporter SWEET11 (SWEET11).